The sequence spans 125 residues: Cu-Zn superoxide dismutase-like protein OPG175 (125 aa).

Cys52 and Cys102 form a disulfide bridge.

It belongs to the Cu-Zn superoxide dismutase family.

The protein localises to the virion. It is found in the host cytoplasm. Its function is as follows. Superoxide dismutase-like protein with no enzymatic activity. The protein is Cu-Zn superoxide dismutase-like protein OPG175 (OPG175) of Homo sapiens (Human).